A 250-amino-acid chain; its full sequence is Ubiquinone/menaquinone biosynthesis C-methyltransferase UbiE (250 aa).

S-adenosyl-L-methionine is bound by residues Ser-73, Asp-94, and 122-123 (NA).

The protein belongs to the class I-like SAM-binding methyltransferase superfamily. MenG/UbiE family.

It catalyses the reaction a 2-demethylmenaquinol + S-adenosyl-L-methionine = a menaquinol + S-adenosyl-L-homocysteine + H(+). It carries out the reaction a 2-methoxy-6-(all-trans-polyprenyl)benzene-1,4-diol + S-adenosyl-L-methionine = a 5-methoxy-2-methyl-3-(all-trans-polyprenyl)benzene-1,4-diol + S-adenosyl-L-homocysteine + H(+). It participates in quinol/quinone metabolism; menaquinone biosynthesis; menaquinol from 1,4-dihydroxy-2-naphthoate: step 2/2. The protein operates within cofactor biosynthesis; ubiquinone biosynthesis. Its function is as follows. Methyltransferase required for the conversion of demethylmenaquinol (DMKH2) to menaquinol (MKH2) and the conversion of 2-polyprenyl-6-methoxy-1,4-benzoquinol (DDMQH2) to 2-polyprenyl-3-methyl-6-methoxy-1,4-benzoquinol (DMQH2). This chain is Ubiquinone/menaquinone biosynthesis C-methyltransferase UbiE, found in Legionella pneumophila (strain Lens).